The primary structure comprises 326 residues: Beta-ketoacyl-[acyl-carrier-protein] synthase III (326 aa).

Active-site residues include cysteine 120 and histidine 253. The ACP-binding stretch occupies residues 254 to 258 (QANIR). The active site involves asparagine 283.

This sequence belongs to the thiolase-like superfamily. FabH family. As to quaternary structure, homodimer.

The protein resides in the cytoplasm. It catalyses the reaction malonyl-[ACP] + acetyl-CoA + H(+) = 3-oxobutanoyl-[ACP] + CO2 + CoA. It functions in the pathway lipid metabolism; fatty acid biosynthesis. Functionally, catalyzes the condensation reaction of fatty acid synthesis by the addition to an acyl acceptor of two carbons from malonyl-ACP. Catalyzes the first condensation reaction which initiates fatty acid synthesis and may therefore play a role in governing the total rate of fatty acid production. Possesses both acetoacetyl-ACP synthase and acetyl transacylase activities. Its substrate specificity determines the biosynthesis of branched-chain and/or straight-chain of fatty acids. The protein is Beta-ketoacyl-[acyl-carrier-protein] synthase III of Cupriavidus taiwanensis (strain DSM 17343 / BCRC 17206 / CCUG 44338 / CIP 107171 / LMG 19424 / R1) (Ralstonia taiwanensis (strain LMG 19424)).